The sequence spans 3032 residues: DmX-like protein 2 (3032 aa).

WD repeat units lie at residues Phe108–Glu145, Lys167–Ile207, and Ala230–Leu278. At Ser326 the chain carries Phosphoserine. Residues Gln418–Leu486 form a disordered region. Over residues Glu422–Ser434 the composition is skewed to acidic residues. The segment covering Gln435–Pro474 has biased composition (basic and acidic residues). Ser473 carries the phosphoserine modification. Residues Asp492–Pro532 form a WD 4 repeat. Residues Pro577–His598 are disordered. Ser587 carries the phosphoserine modification. Residues His589–His598 are compositionally biased toward polar residues. 3 WD repeats span residues His594 to Phe633, Leu750 to Leu802, and Gln879 to Cys921. The tract at residues Val937–His958 is disordered. Residues Ser945 and Ser946 each carry the phosphoserine modification. Residues Ser945 to His958 show a composition bias toward low complexity. One copy of the WD 8 repeat lies at Leu1001–Gly1038. A phosphoserine mark is found at Ser1141, Ser1144, and Ser1152. 2 WD repeats span residues Pro1164 to Gln1205 and Gly1245 to Asp1285. Phosphoserine occurs at positions 1288 and 1399. Thr1416 carries the phosphothreonine modification. The segment at Arg1443–Glu1464 is disordered. A compositionally biased stretch (basic and acidic residues) spans Ile1444–Ser1461. Ser1856 carries the phosphoserine modification. The interval Gln1922–Ala1953 is disordered. Thr2017 carries the phosphothreonine modification. Residues Gly2117–Asn2146 adopt a coiled-coil conformation. Ser2394 and Ser2636 each carry phosphoserine. Over residues Gln2722–Gln2732 the composition is skewed to low complexity. The tract at residues Gln2722–Ser2744 is disordered. 6 WD repeats span residues Arg2757–Cys2796, Ala2800–Lys2839, Cys2846–Leu2888, Cys2894–Thr2933, Ala2936–Ser2975, and Asn2988–Asn3026.

Interacts with MADD and RAB3GAP. As to expression, expressed in the brain and pituitary gland. Detected in the hippocampus, dentate gyrus, hypothalamus, pyriform cortex and the granular and molecular layers of the cerebellum of adult animals. In the hypothalamus, expression is observed in the arcuate nucleus, the ME, the organum vasculosum of the lamina terminalis, and the subfornical organ, the subcommissural organ, and the suprachiasmatic nucleus. Both tanycytes and hypothalamic neurosecretory neurons express the protein. Expressed in the inner and outer hair cells as well as in the spiral ganglion neurons. Expressed in insulin-secreting cells of the islets of Langerhans in the pancreas.

The protein localises to the cytoplasmic vesicle. The protein resides in the secretory vesicle. It is found in the synaptic vesicle membrane. Its subcellular location is the neuronal dense core vesicle. Functionally, may serve as a scaffold protein for MADD and RAB3GA on synaptic vesicles of neuronal and endocrine homeostatic processes. Plays a role in the brain as a key controller of neuronal and endocrine homeostatic processes. The polypeptide is DmX-like protein 2 (Dmxl2) (Mus musculus (Mouse)).